We begin with the raw amino-acid sequence, 472 residues long: Methanethiol oxidase (472 aa).

The protein belongs to the selenium-binding protein family.

Its subcellular location is the nucleus. It is found in the cytoplasm. The protein resides in the cytosol. It localises to the membrane. It carries out the reaction methanethiol + O2 + H2O = hydrogen sulfide + formaldehyde + H2O2 + H(+). It participates in organosulfur degradation. Functionally, catalyzes the oxidation of methanethiol, an organosulfur compound known to be produced in substantial amounts by gut bacteria. Selenium-binding protein which may be involved in the sensing of reactive xenobiotics in the cytoplasm. May be involved in intra-Golgi protein transport. This is Methanethiol oxidase (selenbp1-b) from Xenopus laevis (African clawed frog).